A 364-amino-acid polypeptide reads, in one-letter code: D-alanine--D-alanine ligase (364 aa).

Positions 134 to 344 constitute an ATP-grasp domain; the sequence is KVLLKSFNIP…YESLVDKLIT (211 aa). Residue 167–222 participates in ATP binding; that stretch reads NNKLNYPVIVKPSVLGSSIGINVAYNVSQIEKYIEEAFEYDLTVVVEKFIKAREIE. Aspartate 297, glutamate 311, and asparagine 313 together coordinate Mg(2+).

Belongs to the D-alanine--D-alanine ligase family. Mg(2+) is required as a cofactor. It depends on Mn(2+) as a cofactor.

It localises to the cytoplasm. The enzyme catalyses 2 D-alanine + ATP = D-alanyl-D-alanine + ADP + phosphate + H(+). Its pathway is cell wall biogenesis; peptidoglycan biosynthesis. In terms of biological role, cell wall formation. This Borrelia duttonii (strain Ly) protein is D-alanine--D-alanine ligase.